Here is a 138-residue protein sequence, read N- to C-terminus: UPF0251 protein Dole_1957 (138 aa).

It belongs to the UPF0251 family.

This is UPF0251 protein Dole_1957 from Desulfosudis oleivorans (strain DSM 6200 / JCM 39069 / Hxd3) (Desulfococcus oleovorans).